The following is a 178-amino-acid chain: Bifunctional protein PyrR (178 aa).

Positions 99–111 (VILVDDVLFTGRT) match the PRPP-binding motif.

Belongs to the purine/pyrimidine phosphoribosyltransferase family. PyrR subfamily. In terms of assembly, homodimer and homohexamer; in equilibrium.

It carries out the reaction UMP + diphosphate = 5-phospho-alpha-D-ribose 1-diphosphate + uracil. In terms of biological role, regulates transcriptional attenuation of the pyrimidine nucleotide (pyr) operon by binding in a uridine-dependent manner to specific sites on pyr mRNA. This disrupts an antiterminator hairpin in the RNA and favors formation of a downstream transcription terminator, leading to a reduced expression of downstream genes. Its function is as follows. Also displays a weak uracil phosphoribosyltransferase activity which is not physiologically significant. The protein is Bifunctional protein PyrR of Ligilactobacillus salivarius (strain UCC118) (Lactobacillus salivarius).